Reading from the N-terminus, the 361-residue chain is Aminomethyltransferase (361 aa).

The protein belongs to the GcvT family. As to quaternary structure, the glycine cleavage system is composed of four proteins: P, T, L and H.

The enzyme catalyses N(6)-[(R)-S(8)-aminomethyldihydrolipoyl]-L-lysyl-[protein] + (6S)-5,6,7,8-tetrahydrofolate = N(6)-[(R)-dihydrolipoyl]-L-lysyl-[protein] + (6R)-5,10-methylene-5,6,7,8-tetrahydrofolate + NH4(+). The glycine cleavage system catalyzes the degradation of glycine. In Herpetosiphon aurantiacus (strain ATCC 23779 / DSM 785 / 114-95), this protein is Aminomethyltransferase.